The chain runs to 928 residues: Probable outer membrane protein pmp11 (928 aa).

Residues 1–24 form the signal peptide; the sequence is MKTSIPWVLVSSVLAFSCHLQSLA. The Autotransporter domain occupies 627–928; sequence GMEHKQGFWV…NVDVGTKLRF (302 aa).

This sequence belongs to the PMP outer membrane protein family.

It is found in the secreted. Its subcellular location is the cell wall. It localises to the cell outer membrane. The polypeptide is Probable outer membrane protein pmp11 (pmp11) (Chlamydia pneumoniae (Chlamydophila pneumoniae)).